A 428-amino-acid chain; its full sequence is Enolase (428 aa).

Gln-163 contacts (2R)-2-phosphoglycerate. The active-site Proton donor is Glu-205. Positions 242, 286, and 313 each coordinate Mg(2+). 4 residues coordinate (2R)-2-phosphoglycerate: Lys-338, Arg-367, Ser-368, and Lys-389. Lys-338 functions as the Proton acceptor in the catalytic mechanism.

It belongs to the enolase family. It depends on Mg(2+) as a cofactor.

It localises to the cytoplasm. The protein resides in the secreted. The protein localises to the cell surface. It catalyses the reaction (2R)-2-phosphoglycerate = phosphoenolpyruvate + H2O. It participates in carbohydrate degradation; glycolysis; pyruvate from D-glyceraldehyde 3-phosphate: step 4/5. In terms of biological role, catalyzes the reversible conversion of 2-phosphoglycerate (2-PG) into phosphoenolpyruvate (PEP). It is essential for the degradation of carbohydrates via glycolysis. The protein is Enolase of Bordetella petrii (strain ATCC BAA-461 / DSM 12804 / CCUG 43448).